Here is a 171-residue protein sequence, read N- to C-terminus: Glutathione peroxidase-like peroxiredoxin GPX3 (171 aa).

Catalysis depends on C43, which acts as the Cysteine sulfenic acid (-SOH) intermediate. Residues C43 and C89 are joined by a disulfide bond.

It belongs to the glutathione peroxidase family. As to quaternary structure, interacts with CAP1 and probably YBP1.

The catalysed reaction is a hydroperoxide + [thioredoxin]-dithiol = an alcohol + [thioredoxin]-disulfide + H2O. Its function is as follows. Involved in oxidative stress response and redox homeostasis. Functions as a sensor and transducer of hydroperoxide stress. In response to hydroperoxide stress it oxidizes (activates) the transcription activator CAP1, which is involved in transcription activation of genes of the oxidative stress response pathway. May also play a direct role in hydroperoxide scavenging. The enzyme is not required for the glutaredoxin-mediated antioxidant function. In the presence of peroxides, GPX3 is directly oxidized at Cys-43 to form a cysteine sulfenic acid (-SOH). Cys-43-SOH then forms either an intramolecular disulfide bond (Cys-43 with Cys-89) or a transient, intermolecular disulfide bond with 'Cys-446' of CAP1, which is further resolved into a CAP1 intramolecular disulfide bond ('Cys-303' with 'Cys-598'), which causes its nuclear accumulation and activation, and a reduced Cys-43 in GPX3. Required for C.albicans-mediated macrophage killing. The chain is Glutathione peroxidase-like peroxiredoxin GPX3 from Candida albicans (strain SC5314 / ATCC MYA-2876) (Yeast).